The following is a 62-amino-acid chain: U-stichotoxin-Hau1a (62 aa).

An N-terminal signal peptide occupies residues 1 to 21; the sequence is MKPAIFLMLFVAMFLISEGEG. Residues 22 to 31 constitute a propeptide that is removed on maturation; the sequence is FKPKDAPQER. The residue at position 36 (proline 36) is a Hydroxyproline. Disulfide bonds link cysteine 41–cysteine 53 and cysteine 44–cysteine 59.

This sequence belongs to the Hau1a/HC18/HC19 family.

It is found in the secreted. The protein resides in the nematocyst. Its function is as follows. Toxin that is lethal to crab. Does not produce the typical symptoms associated with sodium channel toxins in crabs, suggesting that it likely does not act on sodium channels. This chain is U-stichotoxin-Hau1a, found in Heteractis aurora (Banded sea anemone).